Reading from the N-terminus, the 487-residue chain is Malonate-semialdehyde dehydrogenase 2 (487 aa).

5 residues coordinate NAD(+): Phe-154, Lys-178, Glu-181, Arg-182, and Ser-231. Cys-286 functions as the Nucleophile in the catalytic mechanism. Glu-386 serves as a coordination point for NAD(+).

The protein belongs to the aldehyde dehydrogenase family. IolA subfamily. As to quaternary structure, homotetramer.

The catalysed reaction is 3-oxopropanoate + NAD(+) + CoA + H2O = hydrogencarbonate + acetyl-CoA + NADH + H(+). It catalyses the reaction 2-methyl-3-oxopropanoate + NAD(+) + CoA + H2O = propanoyl-CoA + hydrogencarbonate + NADH + H(+). It participates in polyol metabolism; myo-inositol degradation into acetyl-CoA; acetyl-CoA from myo-inositol: step 7/7. Its function is as follows. Catalyzes the oxidation of malonate semialdehyde (MSA) and methylmalonate semialdehyde (MMSA) into acetyl-CoA and propanoyl-CoA, respectively. Is involved in a myo-inositol catabolic pathway. Bicarbonate, and not CO2, is the end-product of the enzymatic reaction. This chain is Malonate-semialdehyde dehydrogenase 2, found in Bacillus anthracis.